A 90-amino-acid polypeptide reads, in one-letter code: Probable small nuclear ribonucleoprotein E (90 aa).

Positions 14–89 constitute a Sm domain; the sequence is VNLIFRYLQN…ITLIHAAQQE (76 aa).

Belongs to the snRNP Sm proteins family. Core component of the spliceosomal U1, U2, U4 and U5 small nuclear ribonucleoproteins (snRNPs), the building blocks of the spliceosome.

It is found in the nucleus. The protein resides in the cytoplasm. Its subcellular location is the cytosol. Plays a role in pre-mRNA splicing as a core component of the spliceosomal U1, U2, U4 and U5 small nuclear ribonucleoproteins (snRNPs), the building blocks of the spliceosome. This Caenorhabditis elegans protein is Probable small nuclear ribonucleoprotein E (snr-6).